Here is a 108-residue protein sequence, read N- to C-terminus: MDIVKVCPEIQIAMDIDSGLIAEMRKDILVVDLHPVEDEINRLAQYAKALENSLDPRNSPMKAYAGREGTYKLAGMFQGMFFGFWVTMAILVLVTILAVKMNLSLIGL.

Residues Gly-79–Val-99 traverse the membrane as a helical segment.

The protein belongs to the MtrB family. In terms of assembly, the complex is composed of 8 subunits; MtrA, MtrB, MtrC, MtrD, MtrE, MtrF, MtrG and MtrH.

Its subcellular location is the cell membrane. The catalysed reaction is 5-methyl-5,6,7,8-tetrahydromethanopterin + coenzyme M + 2 Na(+)(in) = 5,6,7,8-tetrahydromethanopterin + methyl-coenzyme M + 2 Na(+)(out). The protein operates within one-carbon metabolism; methanogenesis from CO(2); methyl-coenzyme M from 5,10-methylene-5,6,7,8-tetrahydromethanopterin: step 2/2. Part of a complex that catalyzes the formation of methyl-coenzyme M and tetrahydromethanopterin from coenzyme M and methyl-tetrahydromethanopterin. This is an energy-conserving, sodium-ion translocating step. The sequence is that of Tetrahydromethanopterin S-methyltransferase subunit B from Methanococcus maripaludis (strain C5 / ATCC BAA-1333).